Consider the following 202-residue polypeptide: Inner membrane-spanning protein YciB (202 aa).

6 helical membrane-spanning segments follow: residues 3 to 23, 46 to 66, 74 to 94, 100 to 120, 145 to 165, and 173 to 193; these read FFLDLLPVILFFVAYKFAGAA, ILIATAVAIAATLAQVLIVWL, MLWVSLAIITLFGGATLVFHN, WKPTVFYWTFAGALAVSALLF, LAWIGFFTLMGFLNLYVAYGY, and FKLFGAMGLMLAFFLGQGFYL.

The protein belongs to the YciB family.

It localises to the cell inner membrane. Plays a role in cell envelope biogenesis, maintenance of cell envelope integrity and membrane homeostasis. This is Inner membrane-spanning protein YciB from Azoarcus sp. (strain BH72).